The following is a 464-amino-acid chain: Growth hormone-releasing hormone receptor (464 aa).

An N-terminal signal peptide occupies residues 1-22 (MDSLLWATWVLCLLNLWGVALG). The Extracellular segment spans residues 23–130 (HLHLECDFIT…EEKSYFSTVK (108 aa)). Intrachain disulfides connect cysteine 41–cysteine 64, cysteine 55–cysteine 96, and cysteine 78–cysteine 112. N-linked (GlcNAc...) asparagine glycosylation is present at asparagine 50. Residues 131-151 (IIYTTGHSISIVALCVAIAIL) traverse the membrane as a helical segment. At 152–167 (VALRRLHCPRNYIHTQ) the chain is on the cytoplasmic side. Residues 168-188 (LFATFILKASAVFLKDAAVFQ) traverse the membrane as a helical segment. At 189-210 (GDSTDHCSMSTILCKVSVAVSH) the chain is on the extracellular side. A helical membrane pass occupies residues 211–231 (FATMTNFSWLLAEAVYLSCLL). The Cytoplasmic portion of the chain corresponds to 232 to 240 (ASTSPRSKP). Residues 241-261 (AFWWLVLAGWGLPVLCTGTWV) form a helical membrane-spanning segment. The Extracellular segment spans residues 262-283 (GCKLAFEDTACWDLDDSSPYWW). A helical transmembrane segment spans residues 284–304 (IIKGPIVLSVGVNFGLFLNII). Residues 305–372 (CILLRKLGPA…QLPWRLSKST (68 aa)) lie on the Cytoplasmic side of the membrane. The helical transmembrane segment at 373–393 (LLLIPLFGIHYIIFNFLPDSA) threads the bilayer. Residues 394-398 (GLGIR) lie on the Extracellular side of the membrane. The helical transmembrane segment at 399 to 419 (LPLELGLGSFQGFVVAVLYCF) threads the bilayer. Residues 420–464 (LNQEVRTEISRKWYGHDPELLPARRTCTEWTTPPRSRVKVLTSEC) are Cytoplasmic-facing.

It belongs to the G-protein coupled receptor 2 family. Pituitary gland.

It localises to the cell membrane. Its function is as follows. Receptor for GRF, coupled to G proteins which activate adenylyl cyclase. Stimulates somatotroph cell growth, growth hormone gene transcription and growth hormone secretion. This Rattus norvegicus (Rat) protein is Growth hormone-releasing hormone receptor (Ghrhr).